Consider the following 374-residue polypeptide: Fanconi anemia group F protein (374 aa).

Belongs to the multisubunit FA complex composed of FANCA, FANCB, FANCC, FANCE, FANCF, FANCG, FANCL/PHF9 and FANCM. The complex is not found in FA patients. In complex with FANCA, FANCG and FANCL, but not with FANCC, nor FANCE, interacts with HES1; this interaction may be essential for the stability and nuclear localization of FA core complex proteins.

The protein localises to the nucleus. In terms of biological role, DNA repair protein that may operate in a postreplication repair or a cell cycle checkpoint function. May be implicated in interstrand DNA cross-link repair and in the maintenance of normal chromosome stability. The protein is Fanconi anemia group F protein (FANCF) of Homo sapiens (Human).